A 91-amino-acid polypeptide reads, in one-letter code: Small ribosomal subunit protein uS19 (91 aa).

It belongs to the universal ribosomal protein uS19 family.

Protein S19 forms a complex with S13 that binds strongly to the 16S ribosomal RNA. This Pseudomonas paraeruginosa (strain DSM 24068 / PA7) (Pseudomonas aeruginosa (strain PA7)) protein is Small ribosomal subunit protein uS19.